Consider the following 120-residue polypeptide: FK506-binding protein 1B (120 aa).

The segment at 1–26 (MGLEKQTLRMGNGKDHPQPGDPVELN) is disordered. The PPIase FKBP-type domain maps to 20 to 115 (GDPVELNYTG…VFEVELLKIK (96 aa)).

This sequence belongs to the FKBP-type PPIase family. FKBP1 subfamily.

The catalysed reaction is [protein]-peptidylproline (omega=180) = [protein]-peptidylproline (omega=0). With respect to regulation, inhibited by both FK506 and rapamycin. PPIases accelerate the folding of proteins. It catalyzes the cis-trans isomerization of proline imidic peptide bonds in oligopeptides. The sequence is that of FK506-binding protein 1B (fpr1B) from Aspergillus fumigatus (strain ATCC MYA-4609 / CBS 101355 / FGSC A1100 / Af293) (Neosartorya fumigata).